Here is a 240-residue protein sequence, read N- to C-terminus: Thiopurine S-methyltransferase (240 aa).

24 to 35 contacts S-adenosyl-L-methionine; it reads WKDKWVTRHISF. Residue Phe-35 participates in substrate binding. N6-acetyllysine is present on Lys-53. Residues Leu-64, Glu-85, 129 to 130, and Arg-147 contribute to the S-adenosyl-L-methionine site; that span reads SI.

It belongs to the class I-like SAM-binding methyltransferase superfamily. TPMT family. Monomer.

The protein localises to the cytoplasm. It carries out the reaction S-adenosyl-L-methionine + a thiopurine = S-adenosyl-L-homocysteine + a thiopurine S-methylether.. The catalysed reaction is mercaptopurine + S-adenosyl-L-methionine = 6-methylthiopurine + S-adenosyl-L-homocysteine + H(+). Functionally, catalyzes the S-methylation of thiopurine drugs such as 6-mercaptopurine (also called mercaptopurine, 6-MP or its brand name Purinethol) using S-adenosyl-L-methionine as the methyl donor. TPMT activity modulates the cytotoxic effects of thiopurine prodrugs. A natural substrate for this enzyme has yet to be identified. The chain is Thiopurine S-methyltransferase (Tpmt) from Mus spretus (Western Mediterranean mouse).